Consider the following 200-residue polypeptide: 3-isopropylmalate dehydratase small subunit (200 aa).

It belongs to the LeuD family. LeuD type 1 subfamily. As to quaternary structure, heterodimer of LeuC and LeuD.

The enzyme catalyses (2R,3S)-3-isopropylmalate = (2S)-2-isopropylmalate. It participates in amino-acid biosynthesis; L-leucine biosynthesis; L-leucine from 3-methyl-2-oxobutanoate: step 2/4. Catalyzes the isomerization between 2-isopropylmalate and 3-isopropylmalate, via the formation of 2-isopropylmaleate. The chain is 3-isopropylmalate dehydratase small subunit from Vibrio parahaemolyticus serotype O3:K6 (strain RIMD 2210633).